The primary structure comprises 345 residues: S-adenosylmethionine:tRNA ribosyltransferase-isomerase (345 aa).

This sequence belongs to the QueA family. As to quaternary structure, monomer.

It is found in the cytoplasm. The catalysed reaction is 7-aminomethyl-7-carbaguanosine(34) in tRNA + S-adenosyl-L-methionine = epoxyqueuosine(34) in tRNA + adenine + L-methionine + 2 H(+). It participates in tRNA modification; tRNA-queuosine biosynthesis. Transfers and isomerizes the ribose moiety from AdoMet to the 7-aminomethyl group of 7-deazaguanine (preQ1-tRNA) to give epoxyqueuosine (oQ-tRNA). The sequence is that of S-adenosylmethionine:tRNA ribosyltransferase-isomerase from Helicobacter acinonychis (strain Sheeba).